We begin with the raw amino-acid sequence, 272 residues long: Large ribosomal subunit protein uL29m (272 aa).

3 disordered regions span residues 1–29 (MAAA…PLTQ), 56–87 (KHRG…PRNK), and 227–272 (AAAT…TPRL). Residues 17–29 (SSSTPSPLRPLTQ) are compositionally biased toward low complexity. Composition is skewed to low complexity over residues 227 to 238 (AAATEGEQQAAE) and 249 to 259 (PATAATPESAT). Positions 260-272 (IPSSQQQTDTPRL) are enriched in polar residues.

Belongs to the universal ribosomal protein uL29 family. As to quaternary structure, component of the mitochondrial large ribosomal subunit. Mature mitochondrial ribosomes consist of a small (37S) and a large (54S) subunit. The 37S subunit contains at least 33 different proteins and 1 molecule of RNA (15S). The 54S subunit contains at least 45 different proteins and 1 molecule of RNA (21S).

It localises to the mitochondrion. This is Large ribosomal subunit protein uL29m (MRPL4) from Chaetomium globosum (strain ATCC 6205 / CBS 148.51 / DSM 1962 / NBRC 6347 / NRRL 1970) (Soil fungus).